We begin with the raw amino-acid sequence, 435 residues long: UPF0597 protein AHA_4077 (435 aa).

This sequence belongs to the UPF0597 family.

This is UPF0597 protein AHA_4077 from Aeromonas hydrophila subsp. hydrophila (strain ATCC 7966 / DSM 30187 / BCRC 13018 / CCUG 14551 / JCM 1027 / KCTC 2358 / NCIMB 9240 / NCTC 8049).